A 187-amino-acid chain; its full sequence is Large ribosomal subunit protein uL5 (187 aa).

It belongs to the universal ribosomal protein uL5 family. In terms of assembly, part of the 50S ribosomal subunit; part of the 5S rRNA/L5/L18/L25 subcomplex. Contacts the 5S rRNA and the P site tRNA. Forms a bridge to the 30S subunit in the 70S ribosome.

This is one of the proteins that bind and probably mediate the attachment of the 5S RNA into the large ribosomal subunit, where it forms part of the central protuberance. In the 70S ribosome it contacts protein S13 of the 30S subunit (bridge B1b), connecting the 2 subunits; this bridge is implicated in subunit movement. Contacts the P site tRNA; the 5S rRNA and some of its associated proteins might help stabilize positioning of ribosome-bound tRNAs. The polypeptide is Large ribosomal subunit protein uL5 (Mycobacterium avium (strain 104)).